The sequence spans 454 residues: Cholesterol 7-desaturase nvd (454 aa).

Transmembrane regions (helical) follow at residues 13 to 33 (VLCP…LGAG) and 47 to 67 (TTLS…LWGW). In terms of domain architecture, Rieske spans 117-221 (WYRALDSHLL…SCELNGMVFV (105 aa)). [2Fe-2S] cluster is bound by residues Cys-158, His-160, Cys-178, and His-181.

This sequence belongs to the cholesterol 7-desaturase family. It depends on [2Fe-2S] cluster as a cofactor.

It localises to the membrane. The catalysed reaction is cholesterol + NADPH + O2 + H(+) = 7-dehydrocholesterol + NADP(+) + 2 H2O. It carries out the reaction cholesterol + NADH + O2 + H(+) = 7-dehydrocholesterol + NAD(+) + 2 H2O. Its pathway is steroid hormone biosynthesis; dafachronic acid biosynthesis. In terms of biological role, catalyzes the production of 7-dehydrocholesterol (7-DHC or cholesta-5,7-dien-3beta-ol) by inserting a double bond (desaturating) at the C7-C8 single bond of cholesterol. This reaction is the first step in the synthesis of the steroid hormone Delta(7)-dafachronic acid. The polypeptide is Cholesterol 7-desaturase nvd (nvd) (Xenopus laevis (African clawed frog)).